A 372-amino-acid polypeptide reads, in one-letter code: Homoserine O-acetyltransferase (372 aa).

One can recognise an AB hydrolase-1 domain in the interval 43 to 353 (NAILIFHALT…DKGHDSFLLK (311 aa)). Ser148 (nucleophile) is an active-site residue. Substrate is bound at residue Arg218. Residues Asp314 and His347 contribute to the active site. A substrate-binding site is contributed by Asp348.

This sequence belongs to the AB hydrolase superfamily. MetX family. As to quaternary structure, homodimer.

It is found in the cytoplasm. The enzyme catalyses L-homoserine + acetyl-CoA = O-acetyl-L-homoserine + CoA. Its pathway is amino-acid biosynthesis; L-methionine biosynthesis via de novo pathway; O-acetyl-L-homoserine from L-homoserine: step 1/1. In terms of biological role, transfers an acetyl group from acetyl-CoA to L-homoserine, forming acetyl-L-homoserine. The protein is Homoserine O-acetyltransferase of Pelagibacter ubique (strain HTCC1062).